We begin with the raw amino-acid sequence, 216 residues long: GTP cyclohydrolase-2 (216 aa).

51–55 (RIHSE) contacts GTP. Zn(2+) is bound by residues C56, C67, and C69. GTP-binding positions include Q72, 94–96 (EGR), and T116. The Proton acceptor role is filled by D128. The active-site Nucleophile is the R130. GTP-binding residues include T151 and K156.

This sequence belongs to the GTP cyclohydrolase II family. It depends on Zn(2+) as a cofactor.

The enzyme catalyses GTP + 4 H2O = 2,5-diamino-6-hydroxy-4-(5-phosphoribosylamino)-pyrimidine + formate + 2 phosphate + 3 H(+). It participates in cofactor biosynthesis; riboflavin biosynthesis; 5-amino-6-(D-ribitylamino)uracil from GTP: step 1/4. Catalyzes the conversion of GTP to 2,5-diamino-6-ribosylamino-4(3H)-pyrimidinone 5'-phosphate (DARP), formate and pyrophosphate. This is GTP cyclohydrolase-2 from Haemophilus influenzae (strain PittEE).